A 217-amino-acid polypeptide reads, in one-letter code: Large ribosomal subunit protein eL6 (217 aa).

The protein belongs to the eukaryotic ribosomal protein eL6 family. Component of the large ribosomal subunit. May bind IPO9 with low affinity.

The protein resides in the cytoplasm. The protein localises to the cytosol. Its subcellular location is the rough endoplasmic reticulum. Functionally, component of the large ribosomal subunit. The protein is Large ribosomal subunit protein eL6 (rpl-6) of Caenorhabditis elegans.